Here is a 21-residue protein sequence, read N- to C-terminus: Apolipophorin 2 (21 aa).

In terms of tissue distribution, expressed in hemolymph.

The protein resides in the secreted. Its function is as follows. Constitutes the major component of lipophorin, which mediates transport for various types of lipids in hemolymph. Acts by forming lipoprotein particles that bind lipoproteins and lipids. In Galleria mellonella (Greater wax moth), this protein is Apolipophorin 2.